An 84-amino-acid chain; its full sequence is Omega-conotoxin-like ArMKLT1-02 (84 aa).

An N-terminal signal peptide occupies residues 1 to 22 (MKVTCMMIVAVLFLTAWTFVTA). The propeptide occupies 23 to 51 (DDSISALEDLFAKAHDKMENSEASPLNER). 3 cysteine pairs are disulfide-bonded: Cys-53/Cys-71, Cys-60/Cys-75, and Cys-70/Cys-79.

This sequence belongs to the conotoxin O1 superfamily. In terms of tissue distribution, expressed by the venom duct.

The protein localises to the secreted. In terms of biological role, omega-conotoxins act at presynaptic membranes, they bind and block voltage-gated calcium channels (Cav). The sequence is that of Omega-conotoxin-like ArMKLT1-02 from Conus arenatus (Sand-dusted cone).